The sequence spans 207 residues: MDKIALKITFSAETPKYAQSVLTEYVNFVSQYSLNQTNQEFKQGFNLRLDELRFSKEQIEENLTEEKKVQVENLTNALDIAKKAGIKDFSRGNNISDSKLADGTYLFILAEKYLQAQLDIAKNTPVVYPANYYITDRQLFKLNKLASQLELVEDVKTYYYLSSPDYPVVKDNPKRSLILAIGFIIGILLPTFFILLGSVIQTNKKQS.

A helical transmembrane segment spans residues 177 to 197 (LILAIGFIIGILLPTFFILLG).

The protein localises to the membrane. This is an uncharacterized protein from Haemophilus influenzae (strain ATCC 51907 / DSM 11121 / KW20 / Rd).